We begin with the raw amino-acid sequence, 249 residues long: Probable phosphatase VVA0289 (249 aa).

Histidine 8, histidine 10, histidine 16, histidine 41, glutamate 74, histidine 102, histidine 132, aspartate 194, and histidine 196 together coordinate Zn(2+).

The protein belongs to the PHP family. The cofactor is Zn(2+).

The sequence is that of Probable phosphatase VVA0289 from Vibrio vulnificus (strain YJ016).